Here is a 355-residue protein sequence, read N- to C-terminus: MFVKLLRSVAIGLIVGAILLVAMPSLRSLNPLSTPQFDSTDETPASYNLAVRRAAPAVVNVYNRGLNTNSHNQLEIRTLGSGVIMDQRGYIITNKHVINDADQIIVALQDGRVFEALLVGSDSLTDLAVLKINATGGLPTIPINARRVPHIGDVVLAIGNPYNLGQTITQGIISATGRIGLNPTGRQNFLQTDASINHGNSGGALVNSLGELMGINTLSFDKSNDGETPEGIGFAIPFQLATKIMDKLIRDGRVIRGYIGIGGREIAPLHAQGGGIDQLQGIVVNEVSPDGPAANAGIQVNDLIISVDNKPAISALETMDQVAEIRPGSVIPVVVMRDDKQLTLQVTIQEYPATN.

At 1–4 (MFVK) the chain is on the cytoplasmic side. A helical membrane pass occupies residues 5-27 (LLRSVAIGLIVGAILLVAMPSLR). The Periplasmic portion of the chain corresponds to 28–355 (SLNPLSTPQF…VTIQEYPATN (328 aa)). Residues His-96 and Asp-126 each act as charge relay system in the active site. Thr-184 lines the substrate pocket. Ser-201 (charge relay system) is an active-site residue. Residue 259–264 (IGIGGR) coordinates substrate. In terms of domain architecture, PDZ spans 281 to 326 (GIVVNEVSPDGPAANAGIQVNDLIISVDNKPAISALETMDQVAEIR). Tyr-351 contributes to the substrate binding site.

It belongs to the peptidase S1C family. Homotrimer.

The protein resides in the cell inner membrane. It carries out the reaction Acts on substrates that are at least partially unfolded. The cleavage site P1 residue is normally between a pair of hydrophobic residues, such as Val-|-Val.. With respect to regulation, allosterically activated by the C-terminus of exposed OMP peptides (consensus Tyr-X-Phe-COOH); cleavage only occurs in the presence of peptides. Inhibited when RseB is bound to RseA. Functionally, a site-1 protease (S1P) that cleaves the peptide bond between 'Val-148' and 'Ser-149' in RseA. Part of a regulated intramembrane proteolysis (RIP) cascade. When heat shock or other environmental stresses disrupt protein folding in the periplasm, DegS senses the accumulation of unassembled outer membrane porins (OMP) and then initiates RseA (anti sigma-E factor) degradation by cleaving its periplasmic domain, making it a substrate for subsequent cleavage by RseP. This cascade ultimately leads to the sigma-E-driven expression of a variety of factors dealing with folding stress in the periplasm and OMP assembly. Required for basal and stress-induced degradation of RseA. The protein is Serine endoprotease DegS (degS) of Escherichia coli O157:H7.